The primary structure comprises 236 residues: MTVTADPVTLMKQEVGKAAAALVKSGSIVGLGTGSTTAYTIQYLGDRLKSGELTDIVGIPTSFQSEVLSKQYGVPLTTLDAVDHIDIAIDGADEVDPHKNLIKGGGAAHTREKVVDYLANQFIVVVDSGKLVDRLGSVFAVPVEVIPMAITPVTNAIKQLGGKPELRMGVKKAGPVITDQGNFVLDVRFDSIDDPVNLEKILNNIPGVLENGIFVNCADIVLVGEVKDGQPLVRRL.

Residues 33-36, 90-93, and 103-106 each bind substrate; these read TGST, DGAD, and KGGG. The Proton acceptor role is filled by Glu-112. Residue Lys-130 participates in substrate binding.

It belongs to the ribose 5-phosphate isomerase family. As to quaternary structure, homodimer.

The catalysed reaction is aldehydo-D-ribose 5-phosphate = D-ribulose 5-phosphate. It functions in the pathway carbohydrate degradation; pentose phosphate pathway; D-ribose 5-phosphate from D-ribulose 5-phosphate (non-oxidative stage): step 1/1. Catalyzes the reversible conversion of ribose-5-phosphate to ribulose 5-phosphate. In Nostoc sp. (strain PCC 7120 / SAG 25.82 / UTEX 2576), this protein is Ribose-5-phosphate isomerase A.